The sequence spans 616 residues: Dihydroxy-acid dehydratase (616 aa).

Position 81 (D81) interacts with Mg(2+). Position 122 (C122) interacts with [2Fe-2S] cluster. Mg(2+) is bound by residues D123 and K124. K124 is modified (N6-carboxylysine). A [2Fe-2S] cluster-binding site is contributed by C195. Position 491 (E491) interacts with Mg(2+). Residue S517 is the Proton acceptor of the active site.

This sequence belongs to the IlvD/Edd family. Homodimer. It depends on [2Fe-2S] cluster as a cofactor. The cofactor is Mg(2+).

It carries out the reaction (2R)-2,3-dihydroxy-3-methylbutanoate = 3-methyl-2-oxobutanoate + H2O. It catalyses the reaction (2R,3R)-2,3-dihydroxy-3-methylpentanoate = (S)-3-methyl-2-oxopentanoate + H2O. It participates in amino-acid biosynthesis; L-isoleucine biosynthesis; L-isoleucine from 2-oxobutanoate: step 3/4. It functions in the pathway amino-acid biosynthesis; L-valine biosynthesis; L-valine from pyruvate: step 3/4. Functions in the biosynthesis of branched-chain amino acids. Catalyzes the dehydration of (2R,3R)-2,3-dihydroxy-3-methylpentanoate (2,3-dihydroxy-3-methylvalerate) into 2-oxo-3-methylpentanoate (2-oxo-3-methylvalerate) and of (2R)-2,3-dihydroxy-3-methylbutanoate (2,3-dihydroxyisovalerate) into 2-oxo-3-methylbutanoate (2-oxoisovalerate), the penultimate precursor to L-isoleucine and L-valine, respectively. The polypeptide is Dihydroxy-acid dehydratase (Salmonella newport (strain SL254)).